The chain runs to 419 residues: L-rhamnose isomerase (419 aa).

Mn(2+)-binding residues include histidine 262, aspartate 294, and aspartate 296.

Belongs to the rhamnose isomerase family. Homotetramer. It depends on Mn(2+) as a cofactor.

The protein localises to the cytoplasm. The catalysed reaction is L-rhamnopyranose = L-rhamnulose. It participates in carbohydrate degradation; L-rhamnose degradation; glycerone phosphate from L-rhamnose: step 1/3. Catalyzes the interconversion of L-rhamnose and L-rhamnulose. The polypeptide is L-rhamnose isomerase (Escherichia coli O17:K52:H18 (strain UMN026 / ExPEC)).